We begin with the raw amino-acid sequence, 162 residues long: Ribonuclease (162 aa).

Positions 1–29 (MKKISSVFTMFALIAAILFSGFIPQQAYA) are cleaved as a signal peptide. A propeptide spanning residues 30 to 53 (ETTLTPTATNKTASIQLTSDVHTL) is cleaved from the precursor. E125 functions as the Proton acceptor in the catalytic mechanism. H154 functions as the Proton donor in the catalytic mechanism.

It belongs to the ribonuclease N1/T1 family.

The protein resides in the secreted. Its function is as follows. This is a purine-specific ribonuclease. This Bacillus pumilus (Bacillus mesentericus) protein is Ribonuclease.